We begin with the raw amino-acid sequence, 126 residues long: Holo-[acyl-carrier-protein] synthase (126 aa).

2 residues coordinate Mg(2+): Asp9 and Glu59.

Belongs to the P-Pant transferase superfamily. AcpS family. Mg(2+) serves as cofactor.

It is found in the cytoplasm. The catalysed reaction is apo-[ACP] + CoA = holo-[ACP] + adenosine 3',5'-bisphosphate + H(+). Transfers the 4'-phosphopantetheine moiety from coenzyme A to a Ser of acyl-carrier-protein. In Myxococcus xanthus (strain DK1622), this protein is Holo-[acyl-carrier-protein] synthase.